The primary structure comprises 924 residues: Periplasmic nitrate reductase (924 aa).

The segment at residues 1–30 is a signal peptide (tat-type signal); the sequence is MNRRDFIKNTAIASAASVAGLSVPSSMLGA. A 4Fe-4S Mo/W bis-MGD-type domain is found at 35-91; it reads WKWDKAVCRFCGTGCGIMIARKDGKIVATKGDPAAPVNRGLNCIKGYFNAKIMYGED. [4Fe-4S] cluster is bound by residues Cys42, Cys45, Cys49, and Cys77. Mo-bis(molybdopterin guanine dinucleotide)-binding positions include Lys79, Gln147, Asn172, Cys176, 209 to 216, Met417, Gln421, Asn527, 552 to 553, Lys575, Asp602, and 814 to 823; these read WGANMAEM, SD, and TGRVLEHWHS. Trp890 provides a ligand contact to substrate. The Mo-bis(molybdopterin guanine dinucleotide) site is built by Asn898 and Lys915.

The protein belongs to the prokaryotic molybdopterin-containing oxidoreductase family. NasA/NapA/NarB subfamily. Component of the periplasmic nitrate reductase NapAB complex composed of NapA and NapB. The cofactor is [4Fe-4S] cluster. Mo-bis(molybdopterin guanine dinucleotide) is required as a cofactor. Predicted to be exported by the Tat system. The position of the signal peptide cleavage has not been experimentally proven.

Its subcellular location is the periplasm. It carries out the reaction 2 Fe(II)-[cytochrome] + nitrate + 2 H(+) = 2 Fe(III)-[cytochrome] + nitrite + H2O. Functionally, catalytic subunit of the periplasmic nitrate reductase complex NapAB. Receives electrons from NapB and catalyzes the reduction of nitrate to nitrite. In Campylobacter jejuni subsp. jejuni serotype O:2 (strain ATCC 700819 / NCTC 11168), this protein is Periplasmic nitrate reductase.